A 640-amino-acid chain; its full sequence is Biosynthetic arginine decarboxylase (640 aa).

N6-(pyridoxal phosphate)lysine is present on lysine 105. 290–300 (FDVGGGLAIDY) contributes to the substrate binding site.

Belongs to the Orn/Lys/Arg decarboxylase class-II family. SpeA subfamily. It depends on Mg(2+) as a cofactor. Pyridoxal 5'-phosphate serves as cofactor.

The catalysed reaction is L-arginine + H(+) = agmatine + CO2. Its function is as follows. Catalyzes the biosynthesis of agmatine from arginine. This chain is Biosynthetic arginine decarboxylase, found in Vibrio vulnificus (strain CMCP6).